The following is a 192-amino-acid chain: Putative B3 domain-containing protein At4g03160 (192 aa).

The interval 22-44 is disordered; that stretch reads VFFDQEEEEEDEEEEYDEESVCE. Positions 25 to 44 are enriched in acidic residues; sequence DQEEEEEDEEEEYDEESVCE. The segment at residues 75–173 is a DNA-binding region (TF-B3); it reads KDNQYRLMLG…EICFAIDSTR (99 aa).

It is found in the nucleus. This chain is Putative B3 domain-containing protein At4g03160, found in Arabidopsis thaliana (Mouse-ear cress).